The sequence spans 180 residues: NAD(P)H-quinone oxidoreductase subunit 6, chloroplastic (180 aa).

Helical transmembrane passes span 10-30 (LLLAPLTLSLIFGGIGVVLLT), 32-52 (IIYSALSLGLVLICISFFYII), 57-77 (FVAVAQILIYIGAVNILILFA), 102-122 (IVCTSLFCSLITIILNISWFG), and 153-173 (FLPFELISIILLVALIGAITI).

This sequence belongs to the complex I subunit 6 family. NDH is composed of at least 16 different subunits, 5 of which are encoded in the nucleus.

The protein localises to the plastid. The protein resides in the chloroplast thylakoid membrane. It catalyses the reaction a plastoquinone + NADH + (n+1) H(+)(in) = a plastoquinol + NAD(+) + n H(+)(out). It carries out the reaction a plastoquinone + NADPH + (n+1) H(+)(in) = a plastoquinol + NADP(+) + n H(+)(out). Functionally, NDH shuttles electrons from NAD(P)H:plastoquinone, via FMN and iron-sulfur (Fe-S) centers, to quinones in the photosynthetic chain and possibly in a chloroplast respiratory chain. The immediate electron acceptor for the enzyme in this species is believed to be plastoquinone. Couples the redox reaction to proton translocation, and thus conserves the redox energy in a proton gradient. The sequence is that of NAD(P)H-quinone oxidoreductase subunit 6, chloroplastic (ndhG) from Cryptomeria japonica (Japanese cedar).